The primary structure comprises 191 residues: A-type ATP synthase subunit E 1 (191 aa).

The protein belongs to the V-ATPase E subunit family. In terms of assembly, has multiple subunits with at least A(3), B(3), C, D, E, F, H, I and proteolipid K(x).

Its subcellular location is the cell membrane. Component of the A-type ATP synthase that produces ATP from ADP in the presence of a proton gradient across the membrane. The sequence is that of A-type ATP synthase subunit E 1 from Methanospirillum hungatei JF-1 (strain ATCC 27890 / DSM 864 / NBRC 100397 / JF-1).